We begin with the raw amino-acid sequence, 580 residues long: Long-chain-fatty-acid--AMP ligase FadD28 (580 aa).

A disordered region spans residues 421-440 (SERTFGGKIVTPSPGTPEGP).

This sequence belongs to the ATP-dependent AMP-binding enzyme family.

It catalyses the reaction holo-[mycocerosate synthase] + a long-chain fatty acid + ATP = a long-chain fatty acyl-[mycocerosate synthase] + AMP + diphosphate. The catalysed reaction is a long-chain fatty acid + ATP + H(+) = a long-chain fatty acyl-AMP + diphosphate. It carries out the reaction holo-[mycocerosate synthase] + a long-chain fatty acyl-AMP = a long-chain fatty acyl-[mycocerosate synthase] + AMP + H(+). It participates in lipid metabolism; fatty acid biosynthesis. Its function is as follows. Involved in the biosynthesis of phthiocerol dimycocerosate (PDIM), a cell wall-associated lipid found only in pathogenic mycobacteria. Catalyzes the activation of long-chain fatty acids as acyl-adenylates (acyl-AMP), which are then transferred to the multifunctional polyketide synthase Mas for further chain extension. This Mycobacterium bovis (strain ATCC BAA-935 / AF2122/97) protein is Long-chain-fatty-acid--AMP ligase FadD28 (fadD28).